A 328-amino-acid chain; its full sequence is Phosphate acyltransferase (328 aa).

It belongs to the PlsX family. Homodimer. Probably interacts with PlsY.

It localises to the cytoplasm. It catalyses the reaction a fatty acyl-[ACP] + phosphate = an acyl phosphate + holo-[ACP]. It participates in lipid metabolism; phospholipid metabolism. Its function is as follows. Catalyzes the reversible formation of acyl-phosphate (acyl-PO(4)) from acyl-[acyl-carrier-protein] (acyl-ACP). This enzyme utilizes acyl-ACP as fatty acyl donor, but not acyl-CoA. The polypeptide is Phosphate acyltransferase (Staphylococcus saprophyticus subsp. saprophyticus (strain ATCC 15305 / DSM 20229 / NCIMB 8711 / NCTC 7292 / S-41)).